Reading from the N-terminus, the 442-residue chain is Histidinol dehydrogenase (442 aa).

3 residues coordinate NAD(+): tyrosine 138, glutamine 199, and asparagine 222. Residues serine 245, glutamine 267, and histidine 270 each contribute to the substrate site. Glutamine 267 and histidine 270 together coordinate Zn(2+). Residues glutamate 335 and histidine 336 each act as proton acceptor in the active site. Substrate contacts are provided by histidine 336, aspartate 369, glutamate 423, and histidine 428. Aspartate 369 provides a ligand contact to Zn(2+). Histidine 428 is a Zn(2+) binding site.

Belongs to the histidinol dehydrogenase family. Zn(2+) serves as cofactor.

It carries out the reaction L-histidinol + 2 NAD(+) + H2O = L-histidine + 2 NADH + 3 H(+). The protein operates within amino-acid biosynthesis; L-histidine biosynthesis; L-histidine from 5-phospho-alpha-D-ribose 1-diphosphate: step 9/9. In terms of biological role, catalyzes the sequential NAD-dependent oxidations of L-histidinol to L-histidinaldehyde and then to L-histidine. The protein is Histidinol dehydrogenase of Ralstonia nicotianae (strain ATCC BAA-1114 / GMI1000) (Ralstonia solanacearum).